A 339-amino-acid polypeptide reads, in one-letter code: Nicotinate-nucleotide--dimethylbenzimidazole phosphoribosyltransferase (339 aa).

The Proton acceptor role is filled by glutamate 306.

It belongs to the CobT family.

The enzyme catalyses 5,6-dimethylbenzimidazole + nicotinate beta-D-ribonucleotide = alpha-ribazole 5'-phosphate + nicotinate + H(+). It functions in the pathway nucleoside biosynthesis; alpha-ribazole biosynthesis; alpha-ribazole from 5,6-dimethylbenzimidazole: step 1/2. Catalyzes the synthesis of alpha-ribazole-5'-phosphate from nicotinate mononucleotide (NAMN) and 5,6-dimethylbenzimidazole (DMB). This chain is Nicotinate-nucleotide--dimethylbenzimidazole phosphoribosyltransferase, found in Brucella anthropi (strain ATCC 49188 / DSM 6882 / CCUG 24695 / JCM 21032 / LMG 3331 / NBRC 15819 / NCTC 12168 / Alc 37) (Ochrobactrum anthropi).